The sequence spans 377 residues: Protein RecA (377 aa).

76 to 83 is a binding site for ATP; sequence GPESSGKT.

The protein belongs to the RecA family.

It is found in the cytoplasm. Can catalyze the hydrolysis of ATP in the presence of single-stranded DNA, the ATP-dependent uptake of single-stranded DNA by duplex DNA, and the ATP-dependent hybridization of homologous single-stranded DNAs. It interacts with LexA causing its activation and leading to its autocatalytic cleavage. The protein is Protein RecA of Corynebacterium aurimucosum (strain ATCC 700975 / DSM 44827 / CIP 107346 / CN-1) (Corynebacterium nigricans).